Reading from the N-terminus, the 184-residue chain is Bifunctional protein PyrR (184 aa).

The PRPP-binding signature appears at 105-117 (VVMVDDVLFTGRT).

This sequence belongs to the purine/pyrimidine phosphoribosyltransferase family. PyrR subfamily.

The enzyme catalyses UMP + diphosphate = 5-phospho-alpha-D-ribose 1-diphosphate + uracil. Functionally, regulates the transcription of the pyrimidine nucleotide (pyr) operon in response to exogenous pyrimidines. Its function is as follows. Also displays a weak uracil phosphoribosyltransferase activity which is not physiologically significant. The chain is Bifunctional protein PyrR from Rubrobacter xylanophilus (strain DSM 9941 / JCM 11954 / NBRC 16129 / PRD-1).